A 150-amino-acid polypeptide reads, in one-letter code: Siroheme decarboxylase NirD subunit (150 aa).

It belongs to the Ahb/Nir family. In terms of assembly, probably forms a complex composed of NirD, NirL, NirG and NirH. All proteins are required for the total conversion of siroheme to didecarboxysiroheme.

The catalysed reaction is siroheme + 2 H(+) = 12,18-didecarboxysiroheme + 2 CO2. It participates in porphyrin-containing compound metabolism. Functionally, involved in heme d1 biosynthesis. Catalyzes the decarboxylation of siroheme into didecarboxysiroheme. This is Siroheme decarboxylase NirD subunit from Pseudomonas aeruginosa (strain ATCC 15692 / DSM 22644 / CIP 104116 / JCM 14847 / LMG 12228 / 1C / PRS 101 / PAO1).